The sequence spans 145 residues: Large ribosomal subunit protein uL14m (145 aa).

Residues 1–30 (MAFSSGLWGPCVHMSRAFSQRCFSTTGSLG) constitute a mitochondrion transit peptide.

The protein belongs to the universal ribosomal protein uL14 family. In terms of assembly, component of the mitochondrial ribosome large subunit (39S) which comprises a 16S rRNA and about 50 distinct proteins. Interacts with MALSU1.

The protein localises to the mitochondrion. Functionally, may form part of 2 intersubunit bridges in the assembled ribosome. Upon binding to MALSU1, intersubunit bridge formation is blocked, preventing ribosome formation and repressing translation. This is Large ribosomal subunit protein uL14m (MRPL14) from Bos taurus (Bovine).